Here is a 491-residue protein sequence, read N- to C-terminus: Probable cytosol aminopeptidase (491 aa).

Mn(2+)-binding residues include Lys261 and Asp266. Residue Lys273 is part of the active site. Mn(2+)-binding residues include Asp285, Asp344, and Glu346. The active site involves Arg348.

It belongs to the peptidase M17 family. Mn(2+) serves as cofactor.

Its subcellular location is the cytoplasm. The enzyme catalyses Release of an N-terminal amino acid, Xaa-|-Yaa-, in which Xaa is preferably Leu, but may be other amino acids including Pro although not Arg or Lys, and Yaa may be Pro. Amino acid amides and methyl esters are also readily hydrolyzed, but rates on arylamides are exceedingly low.. It catalyses the reaction Release of an N-terminal amino acid, preferentially leucine, but not glutamic or aspartic acids.. In terms of biological role, presumably involved in the processing and regular turnover of intracellular proteins. Catalyzes the removal of unsubstituted N-terminal amino acids from various peptides. In Picosynechococcus sp. (strain ATCC 27264 / PCC 7002 / PR-6) (Agmenellum quadruplicatum), this protein is Probable cytosol aminopeptidase.